Consider the following 303-residue polypeptide: MSATPTVPITFQGLIQTLNQFWAQQGCVLIQPLDLEVGAGTFHPATFLRAIGPEGWNAAYVQPSRRPTDGRYGENPNRLQRYYQYQVAMKPAPDNIQQLYLDSLKALGIDPLVHDLRFVEDNWESPTLGAWGLGWEVWLNGMEVTQFTYFQQAGGLECRPVLGEITYGLERLCMYLQNCDNVYDLIWTYGPDGQPVTYGDVYHQNEVEQSTYNFEYADVEEMFHRFDACEREAQKLVEVNLPLPAYEQVMKASHTFNLLDARRAISVTERQRYILRVRALAQAVARAYYEQREKLGFPGAKKA.

Belongs to the class-II aminoacyl-tRNA synthetase family. Tetramer of two alpha and two beta subunits.

The protein localises to the cytoplasm. It catalyses the reaction tRNA(Gly) + glycine + ATP = glycyl-tRNA(Gly) + AMP + diphosphate. The chain is Glycine--tRNA ligase alpha subunit from Stenotrophomonas maltophilia (strain K279a).